The following is a 103-amino-acid chain: Large ribosomal subunit protein bL21 (103 aa).

Belongs to the bacterial ribosomal protein bL21 family. Part of the 50S ribosomal subunit. Contacts protein L20.

Functionally, this protein binds to 23S rRNA in the presence of protein L20. This chain is Large ribosomal subunit protein bL21, found in Serratia proteamaculans (strain 568).